Consider the following 487-residue polypeptide: MFRQLKKNLVATLIAAMTIGQVAPAFADSADTLPDMGTSAGSTLSIGQEMQMGDYYVRQLRGSAPLINDPLLTQYINSLGMRLVSHANSVKTPFHFFLINNDEINAFAFFGGNVVLHSALFRYSDNESQLASVMAHEISHVTQRHLARAMEDQQRSAPLTWVGALGSILLAMASPQAGMAALTGTLAGTRQGMISFTQQNEQEADRIGIQVLQRSGFDPQAMPTFLEKLLDQARYSSRPPEILLTHPLPESRLADARNRANQMRPMVVQSSEDFYLAKARTLGMYNSGRNQLTSDLLDEWAKGNVRQQRAAQYGRALQAMEANKYDEARKTLQPLLAAEPGNAWYLDLATDIDLGQNKANEAINRLKNARDLRTNPVLQLNLANAYLQGGQPQEAANILNRYTFNNKDDSNGWDLLAQAEAALNNRDQELAARAEGYALAGRLDQAISLLSSASSQVKLGSLQQARYDARIDQLRQLQERFKPYTKM.

An N-terminal signal peptide occupies residues 1–27 (MFRQLKKNLVATLIAAMTIGQVAPAFA). Zn(2+) is bound at residue histidine 136. Residue glutamate 137 is part of the active site. Zn(2+)-binding residues include histidine 140 and glutamate 201. Aspartate 205 (proton donor) is an active-site residue. 4 TPR repeats span residues 309-342 (RAAQYGRALQAMEANKYDEARKTLQPLLAAEPGN), 344-376 (WYLDLATDIDLGQNKANEAINRLKNARDLRTNP), 377-409 (VLQLNLANAYLQGGQPQEAANILNRYTFNNKDD), and 427-460 (DQELAARAEGYALAGRLDQAISLLSSASSQVKLG).

Belongs to the peptidase M48 family. BepA subfamily. As to quaternary structure, interacts with BamA and LoiP. Requires Zn(2+) as cofactor.

Its subcellular location is the periplasm. Its activity is regulated as follows. Protease activity is inhibited by the metal chelating reagents 1,10-phenanthroline and EDTA. In terms of biological role, functions both as a chaperone and a metalloprotease. Maintains the integrity of the outer membrane by promoting either the assembly or the elimination of outer membrane proteins, depending on their folding state. Promotes disulfide rearrangement of LptD during its biogenesis, and proteolytic degradation of LptD and BamA when their proper assembly is compromised. May facilitate membrane attachment of LoiP under unfavorable conditions. The polypeptide is Beta-barrel assembly-enhancing protease (Escherichia coli (strain K12)).